A 253-amino-acid chain; its full sequence is Testis-expressed protein 101 (253 aa).

Residues 1-24 form the signal peptide; that stretch reads MAACWVHYLLLLLLGVSHQTLAQS. Residues asparagine 44, asparagine 112, asparagine 117, asparagine 121, and asparagine 162 are each glycosylated (N-linked (GlcNAc...) asparagine). One can recognise a UPAR/Ly6 1 domain in the interval 53–117; sequence ETCNPGELCQ…SNYCNSSLCN (65 aa). The UPAR/Ly6 2 domain occupies 143 to 218; it reads CPTCVALGSC…KETCSYHSLL (76 aa). Serine 226 carries the GPI-anchor amidated serine lipid modification. Residues 227-253 constitute a propeptide, removed in mature form; it reads RASGRSTSLWVLELLLPAVLVALTHFP.

In terms of assembly, interacts with VAMP3. Interacts with LY6K. Interacts with DPEP3; co-localized on the cell surface of spermatocytes, spermatids, and testicular spermatozoa, co-localized only in cytoplasmic droplets of caput and corpus epididymal sperm. Interacts with ADAM5. In terms of processing, N-glycosylated; by high mannose and/or biantennary complex and/or certain types of hybrid oligosaccharides; possesses different oligosaccharides chains according to its subcellular localization in the testis. Post-translationally, sheds from membrane raft by ACE and released from the cell surface of epididymal sperm while it passes through the caput epididymis leading to disappearance of TEX101 on spermatozoa; is essential to produce fertile spermatozoa.

It localises to the cell membrane. The protein localises to the membrane raft. The protein resides in the cytoplasmic vesicle. Its subcellular location is the secretory vesicle. It is found in the acrosome. It localises to the secreted. Its function is as follows. Plays a role in fertilization by controlling binding of sperm to zona pellucida and migration of spermatozoa into the oviduct. May play a role in signal transduction and promote protein tyrosine phosphorylation. In Cricetulus griseus (Chinese hamster), this protein is Testis-expressed protein 101.